The primary structure comprises 390 residues: Magnesium-protoporphyrin IX monomethyl ester [oxidative] cyclase (390 aa).

Belongs to the AcsF family. It depends on Fe cation as a cofactor.

The catalysed reaction is Mg-protoporphyrin IX 13-monomethyl ester + 3 NADPH + 3 O2 + 2 H(+) = 3,8-divinyl protochlorophyllide a + 3 NADP(+) + 5 H2O. The protein operates within porphyrin-containing compound metabolism; chlorophyll biosynthesis (light-independent). Functionally, catalyzes the formation of the isocyclic ring in chlorophyll biosynthesis. Mediates the cyclase reaction, which results in the formation of divinylprotochlorophyllide (Pchlide) characteristic of all chlorophylls from magnesium-protoporphyrin IX 13-monomethyl ester (MgPMME). This chain is Magnesium-protoporphyrin IX monomethyl ester [oxidative] cyclase, found in Prochlorococcus marinus subsp. pastoris (strain CCMP1986 / NIES-2087 / MED4).